Reading from the N-terminus, the 241-residue chain is tRNA pseudouridine synthase B (241 aa).

The Nucleophile role is filled by aspartate 45.

This sequence belongs to the pseudouridine synthase TruB family. Type 1 subfamily.

It catalyses the reaction uridine(55) in tRNA = pseudouridine(55) in tRNA. Its function is as follows. Responsible for synthesis of pseudouridine from uracil-55 in the psi GC loop of transfer RNAs. This is tRNA pseudouridine synthase B from Chlamydia trachomatis serovar L2 (strain ATCC VR-902B / DSM 19102 / 434/Bu).